We begin with the raw amino-acid sequence, 88 residues long: Kunitz-type serine protease inhibitor taicotoxin (88 aa).

The first 24 residues, 1 to 24, serve as a signal peptide directing secretion; the sequence is MSSGGLLLLLGLLTLWEVLTPVSS. The region spanning 31–81 is the BPTI/Kunitz inhibitor domain; sequence CHLPPKPGPCRAAIPRFYYNPHSKQCEKFIYGGCHGNANSFKTPDECNYTC. 3 disulfides stabilise this stretch: C31-C81, C40-C64, and C56-C77. The propeptide occupies 87-88; the sequence is PK.

The protein belongs to the venom Kunitz-type family. In terms of assembly, heterotrimer composed of an alpha-neurotoxin-like peptide of 8 kDa (AC P0CJ35), a neurotoxic phospholipase of 16 kDa (AC Q7LZG2) and this serine protease inhibitor of 7 kDa at an approximate stoichiometry of 1:1:4; non-covalently linked. In terms of tissue distribution, expressed by the venom gland.

It is found in the secreted. Heterotrimer: blocks the voltage-dependent L-type calcium channels (Cav) from the heart, and the small conductance calcium-activated potassium channels (KCa) in the chromaffin cells and in the brain. Is very toxic to mice. Functionally, monomer: serine protease inhibitor that inhibits plasma kallikrein (Ki=0.057 nM), tissue kallikrein (Ki=0.23 nM), trypsin (Ki=0.31 nM), plasmin (Ki=6.1 nM), elastase (Ki=201 nM), factor Xa (Ki=871 nM), alpha-factor XIIa (Ki=2380 nM). Does not inhibit APC, urokinase-type plasminogen activator (uPA/PLAU), tissue plasminogen activator (tPA/PLAT), thrombin and factor VIIa. In addition, the monomer inhibits fibrinolysis in whole blood and prolonged the intrinsec clotting time. This is Kunitz-type serine protease inhibitor taicotoxin from Oxyuranus scutellatus scutellatus (Australian taipan).